The primary structure comprises 421 residues: Dihydroorotase (421 aa).

Residues histidine 59 and histidine 61 each coordinate Zn(2+). Residues histidine 61–arginine 63 and asparagine 93 each bind substrate. 3 residues coordinate Zn(2+): aspartate 150, histidine 177, and histidine 230. Asparagine 276 lines the substrate pocket. Aspartate 303 contacts Zn(2+). Aspartate 303 is a catalytic residue. Residue histidine 307 coordinates substrate.

This sequence belongs to the metallo-dependent hydrolases superfamily. DHOase family. Class I DHOase subfamily. Requires Zn(2+) as cofactor.

The catalysed reaction is (S)-dihydroorotate + H2O = N-carbamoyl-L-aspartate + H(+). Its pathway is pyrimidine metabolism; UMP biosynthesis via de novo pathway; (S)-dihydroorotate from bicarbonate: step 3/3. In terms of biological role, catalyzes the reversible cyclization of carbamoyl aspartate to dihydroorotate. This is Dihydroorotase from Desulfotalea psychrophila (strain LSv54 / DSM 12343).